Reading from the N-terminus, the 417-residue chain is MSLAPKKTIDDAVVKGKKVLIRVDFNVPVKNGEITNDFRIRSALPTIQKVLKEGGSCILMSHLGRPKGAKMSDPKPAKSVRGYEEAATLRPVAARLSELLGQKVEFAPDCLDAASYAAKLKGGDVLLLENVRFYAEEGSKKEEERDAMAKVLAAYGDVYVSDAFGTAHRDSADMTGIPKVLGAGYAGYLMEKEINYFAQVLNNPPRPLVAIVGGAKVSDKIQLLDNMLGRINYLVIGGAMAYTFQKAQGHAIGISMCEEDKLDLAKSLLKKAQERNVEVLLPVDHVCNKEFQGVDAPLVTKDVEIPEGYMALDIGPKTIKIYEDVIAKCKSTIWNGPMGVFEMPCYSKGTFAVAKAMGNGTQKNGLMSIIGGGDTASAAELSGEAKNMSHVSTGGGASLELLEGKSLPGVTVLTNKE.

(2R)-3-phosphoglycerate-binding residues include V23, D24, F25, N26, R39, S61, H62, G64, R65, R132, H168, and R169. Residues G214 and A215 each coordinate ADP. Position 214 (G214) interacts with CDP. AMP contacts are provided by A215 and K216. A215 lines the ATP pocket. Position 215 (A215) interacts with Mg(2+). K216 contacts (2R)-3-phosphoglycerate. D219 contributes to the CDP binding site. Position 219 (D219) interacts with Mg(2+). ADP is bound by residues K220 and G238. K220 is an AMP binding site. K220 serves as a coordination point for ATP. G238 provides a ligand contact to CDP. Residues A239 and A311 each coordinate AMP. 2 residues coordinate ATP: A239 and A311. Residues A311 and N335 each coordinate ADP. Residues G336 and F341 each contribute to the CDP site. ADP contacts are provided by F341, E342, D374, and T375. An AMP-binding site is contributed by E342. ATP-binding residues include E342, D374, and T375. D374 provides a ligand contact to Mg(2+).

The protein belongs to the phosphoglycerate kinase family. As to quaternary structure, monomer. It depends on Mg(2+) as a cofactor.

The protein localises to the cytoplasm. The catalysed reaction is (2R)-3-phosphoglycerate + ATP = (2R)-3-phospho-glyceroyl phosphate + ADP. It functions in the pathway carbohydrate degradation; glycolysis; pyruvate from D-glyceraldehyde 3-phosphate: step 2/5. This chain is Phosphoglycerate kinase, cytosolic (PGKB), found in Crithidia fasciculata.